The following is a 252-amino-acid chain: Triosephosphate isomerase (252 aa).

Substrate is bound at residue 10–12 (NWK). Catalysis depends on histidine 96, which acts as the Electrophile. Glutamate 168 serves as the catalytic Proton acceptor. Residues glycine 174, serine 214, and 235 to 236 (GG) each bind substrate.

This sequence belongs to the triosephosphate isomerase family. In terms of assembly, homodimer.

The protein resides in the cytoplasm. The enzyme catalyses D-glyceraldehyde 3-phosphate = dihydroxyacetone phosphate. Its pathway is carbohydrate biosynthesis; gluconeogenesis. It participates in carbohydrate degradation; glycolysis; D-glyceraldehyde 3-phosphate from glycerone phosphate: step 1/1. Involved in the gluconeogenesis. Catalyzes stereospecifically the conversion of dihydroxyacetone phosphate (DHAP) to D-glyceraldehyde-3-phosphate (G3P). The protein is Triosephosphate isomerase of Lactococcus lactis subsp. lactis (strain IL1403) (Streptococcus lactis).